A 704-amino-acid chain; its full sequence is uncharacterized protein (704 aa).

This is an uncharacterized protein from Rickettsia conorii (strain ATCC VR-613 / Malish 7).